An 87-amino-acid polypeptide reads, in one-letter code: Small ribosomal subunit protein bS18 (87 aa).

Belongs to the bacterial ribosomal protein bS18 family. Part of the 30S ribosomal subunit. Forms a tight heterodimer with protein bS6.

Functionally, binds as a heterodimer with protein bS6 to the central domain of the 16S rRNA, where it helps stabilize the platform of the 30S subunit. The chain is Small ribosomal subunit protein bS18 from Nitratidesulfovibrio vulgaris (strain ATCC 29579 / DSM 644 / CCUG 34227 / NCIMB 8303 / VKM B-1760 / Hildenborough) (Desulfovibrio vulgaris).